Consider the following 492-residue polypeptide: G protein-activated inward rectifier potassium channel 1 (492 aa).

The Cytoplasmic segment spans residues 1 to 72 (MSALRRKLGD…LFTTLVDLKW (72 aa)). Positions 16-35 (STSASGGGLPPPRAAPRGKR) are disordered. Residues 73–97 (RWNLFIFVLTYTVAWLFMASMWWVI) traverse the membrane as a helical segment. At 98–121 (AYMRGDLNKAHDDSYTPCVANVYN) the chain is on the extracellular side. An intramembrane region (helical; Pore-forming) is located at residues 122–133 (FPSAFLFFIETE). The segment at residues 134 to 140 (ATIGYGY) is an intramembrane region (pore-forming). Residues 135 to 140 (TIGYGY) carry the Selectivity filter motif. The Extracellular portion of the chain corresponds to 141–149 (RYITDKCPE). A helical transmembrane segment spans residues 150–171 (GIILFLFQSILGSIVDAFLIGC). The Cytoplasmic segment spans residues 172–492 (MFIKMSQPKK…LRKMNSDRFT (321 aa)). The interval 174 to 201 (IKMSQPKKRAETLMFSEHAAISMRDGKL) is polyphosphoinositide (PIP2)-binding. Positions 452 to 492 (SDPMSQSVADLPPKLQKLSGGGRMEGNLPPKLRKMNSDRFT) are disordered.

It belongs to the inward rectifier-type potassium channel (TC 1.A.2.1) family. KCNJ3 subfamily. As to quaternary structure, associates with KCNJ5/GIRK4 or KCNJ6/GIRK2 or KCNJ9/GIRK3 to form a G-protein activated heteromultimer pore-forming unit. The resulting inward current is much larger.

It localises to the membrane. It catalyses the reaction K(+)(in) = K(+)(out). With respect to regulation, heteromultimer composed of KCNJ3/GIRK1 and KCNJ5/GIRK4 is activated by phosphatidylinositol 4,5 biphosphate (PtdIns(4,5)P2). In terms of biological role, inward rectifier potassium channels are characterized by a greater tendency to allow potassium to flow into the cell rather than out of it. Their voltage dependence is regulated by the concentration of extracellular potassium; as external potassium is raised, the voltage range of the channel opening shifts to more positive voltages. The inward rectification is mainly due to the blockage of outward current by internal magnesium. This potassium channel is controlled by G proteins. This receptor plays a crucial role in regulating the heartbeat. The polypeptide is G protein-activated inward rectifier potassium channel 1 (KCNJ3) (Gallus gallus (Chicken)).